The primary structure comprises 31 residues: Scolopendra 20566.01 Da toxin (31 aa).

It belongs to the CRISP family. Venom allergen 5-like subfamily. Contains 3 disulfide bonds. Expressed by the venom gland.

Its subcellular location is the secreted. This chain is Scolopendra 20566.01 Da toxin, found in Scolopendra angulata (Barbados giant red centipede).